A 1372-amino-acid polypeptide reads, in one-letter code: MSVVNFYGQLSNTQQFDQIRINIASPDQVRSWSFGEVTKPETINYRTFKPEKDGLFCARIFGPVKDYECLCGKYKRMKNRGITCEKCGVEVTVSRVRRERMGHIELAAPVAHIWFLKSLPSRISTLLDMTMRDVEKILYFENYVVVDPGLSILQKGELLTEEELQKAKDKYGEDAFTASIGAEVIQQMLKELDFSKLKQELYEELQTTSSEVKKKKLVKRLKLVENFLESENKPEWMIMDVLPVIPPEIRPLVMLDGGRFATSDLNELYRRVINRNNRLKKLIESKAPDIIVRNEKRMLQEAVDALFDNGRRGRAAKNANKRPFKSLSDMLKGKQGRFRQNLLGKRVDYSGRSVIVVGPELKLHQCGLPKKMALELFKPFIYSKLELYGIATTIKAAKRMVEAEKSEVWDVLEEVIREHPVLLNRAPTLHRLGIQAFEPLLIEGKAIQLHPLVCAAFNADFDGDQMAVHIPLSIEAQLEARVFMMSTNNILSPANGRPIIVPDKDIVLGLYYLTLAFDNEVGAGMMFSDLAEMEHALYNKFITIHTKIKYRRNQLNAEGKMVPVIIDTTYGRLMVGELLPSNPNIEFKCINKQLTKKDISLVIDLVYRHCGQKATVIFADQLMKLGFKYACSSGISFGMDDMVVPESKSTHINETQLEIKEFEQQYSNGLITYGEKYNKVVDAWSRCTDRVANDMMKEIATPPVNDAPNHQKINAIYMMAISGARGSFQQIKQLGGMRGLMTKSNGQIIQTPIISNFKEGLTEFECFNSANGMRKGQIDTALKTASSGYLTRKLVDVAQDCIITEKDCGTDKGIEVKSVIEGGEVIVPLAEKILGRTAAIDIFHPVTNDLILNKGELINEAKLEQIESAGFDRIMIKSVLTCESTTGICSICYGRDLATGTLVSEGEAIGVIAAQSIGEPGTQLTMRTFHIGGAATKGAEVSSVDASYDAKVKIISRNVVINSEERKIVMSRNCELLLLDNNGNEKARHKIPYGARLLVDDGDMVIKTQKLAEWDPYTIPIITEKSGKVLFKDMVEGISIRDVTDEATGIPSKVIIESKQYSRGAELRPRIQLLDAKGEVITLSNGLEARYYLPVGAVLSVEDGVQISVGDIIARIPKESTTTKDITGGLPRVAELVEARRPKDHAVIAEIDGRVEFGKDYKSKRRIIIHPIDETMSIEYMVPKGKHVVVNEGDFVKKGDLLIDGNPVLQDILKVMGVEVLANYIVNEVQAVYRLQGVKIDDKHIEVIIRQMLQKVEVTDSGGTTLLVGEKIDRHEFDEINEKAMKNGLKPAEAQLILQGITKASLQTRSFISAASFQETTRVLTEAAIAGKVDKLRGLKENVIVGRLVPAGTGYFMDKMRKAAAKLDEENV.

Zn(2+) contacts are provided by cysteine 69, cysteine 71, cysteine 84, and cysteine 87. Residues aspartate 460, aspartate 462, and aspartate 464 each contribute to the Mg(2+) site. Cysteine 808, cysteine 882, cysteine 889, and cysteine 892 together coordinate Zn(2+).

The protein belongs to the RNA polymerase beta' chain family. In terms of assembly, the RNAP catalytic core consists of 2 alpha, 1 beta, 1 beta' and 1 omega subunit. When a sigma factor is associated with the core the holoenzyme is formed, which can initiate transcription. Mg(2+) is required as a cofactor. It depends on Zn(2+) as a cofactor.

It catalyses the reaction RNA(n) + a ribonucleoside 5'-triphosphate = RNA(n+1) + diphosphate. In terms of biological role, DNA-dependent RNA polymerase catalyzes the transcription of DNA into RNA using the four ribonucleoside triphosphates as substrates. The polypeptide is DNA-directed RNA polymerase subunit beta' (Rickettsia conorii (strain ATCC VR-613 / Malish 7)).